We begin with the raw amino-acid sequence, 512 residues long: Eukaryotic translation initiation factor 3 subunit L (512 aa).

The region spanning D291–D477 is the PCI domain.

Belongs to the eIF-3 subunit L family. Component of the eukaryotic translation initiation factor 3 (eIF-3) complex.

It is found in the cytoplasm. Component of the eukaryotic translation initiation factor 3 (eIF-3) complex, which is involved in protein synthesis of a specialized repertoire of mRNAs and, together with other initiation factors, stimulates binding of mRNA and methionyl-tRNAi to the 40S ribosome. The eIF-3 complex specifically targets and initiates translation of a subset of mRNAs involved in cell proliferation. The protein is Eukaryotic translation initiation factor 3 subunit L of Monosiga brevicollis (Choanoflagellate).